Reading from the N-terminus, the 227-residue chain is 2,3-bisphosphoglycerate-dependent phosphoglycerate mutase (227 aa).

Substrate is bound by residues 7 to 14 (RHGQSEWN), 20 to 21 (TG), arginine 59, 86 to 89 (ERHY), lysine 97, 113 to 114 (RR), and 182 to 183 (GN). Histidine 8 (tele-phosphohistidine intermediate) is an active-site residue. Glutamate 86 serves as the catalytic Proton donor/acceptor.

This sequence belongs to the phosphoglycerate mutase family. BPG-dependent PGAM subfamily. In terms of assembly, homodimer.

The catalysed reaction is (2R)-2-phosphoglycerate = (2R)-3-phosphoglycerate. The protein operates within carbohydrate degradation; glycolysis; pyruvate from D-glyceraldehyde 3-phosphate: step 3/5. Catalyzes the interconversion of 2-phosphoglycerate and 3-phosphoglycerate. This is 2,3-bisphosphoglycerate-dependent phosphoglycerate mutase from Neisseria meningitidis serogroup C / serotype 2a (strain ATCC 700532 / DSM 15464 / FAM18).